A 305-amino-acid chain; its full sequence is Glutaminase 2 (305 aa).

Substrate is bound by residues serine 61, asparagine 113, glutamate 158, asparagine 165, tyrosine 189, tyrosine 241, and valine 259.

Belongs to the glutaminase family. As to quaternary structure, homotetramer.

The catalysed reaction is L-glutamine + H2O = L-glutamate + NH4(+). In Clostridium perfringens (strain 13 / Type A), this protein is Glutaminase 2.